We begin with the raw amino-acid sequence, 281 residues long: Probable endonuclease 4 (281 aa).

The Zn(2+) site is built by His69, His109, Glu145, Asp179, His182, His216, Asp229, His231, and Glu261.

This sequence belongs to the AP endonuclease 2 family. It depends on Zn(2+) as a cofactor.

It catalyses the reaction Endonucleolytic cleavage to 5'-phosphooligonucleotide end-products.. Endonuclease IV plays a role in DNA repair. It cleaves phosphodiester bonds at apurinic or apyrimidinic (AP) sites, generating a 3'-hydroxyl group and a 5'-terminal sugar phosphate. The chain is Probable endonuclease 4 from Aeromonas salmonicida (strain A449).